A 185-amino-acid polypeptide reads, in one-letter code: Dihydrofolate reductase (185 aa).

The region spanning 5–184 is the DHFR domain; sequence KLNLIAAACD…ISYYFRVYKK (180 aa). NADP(+) is bound by residues A11 and 17-23; that span reads GIGVNGA. Substrate is bound at residue 31–36; it reads EMAYFT. 55–57 contacts NADP(+); the sequence is RRT. Position 71 (R71) interacts with substrate. NADP(+) is bound by residues 77 to 79 and 117 to 124; these read THN and GGSSIYRA.

It belongs to the dihydrofolate reductase family.

The catalysed reaction is (6S)-5,6,7,8-tetrahydrofolate + NADP(+) = 7,8-dihydrofolate + NADPH + H(+). It functions in the pathway cofactor biosynthesis; tetrahydrofolate biosynthesis; 5,6,7,8-tetrahydrofolate from 7,8-dihydrofolate: step 1/1. Activated by dithiothreitol and p-chloromercuribenzoate. Inhibited by trimethoprim, methotrexate, sodium tetrathionate and hydroxymercuribenzoate. In terms of biological role, key enzyme in folate metabolism. Catalyzes an essential reaction for de novo glycine and purine synthesis, and for DNA precursor synthesis. In Heliothis virescens (Tobacco budworm moth), this protein is Dihydrofolate reductase (DHFR).